The primary structure comprises 217 residues: Adenylate kinase (217 aa).

ATP is bound at residue 10–15; the sequence is GAGKGT. An NMP region spans residues 30–59; it reads STGDMFRAAMKEETQLGLEAKSFIDKGELV. Residues T31, R36, 57-59, 85-88, and Q92 each bind AMP; these read ELV and GFPR. Positions 126-163 are LID; it reads GRRICKNCGATYHLVFNPPAKENVCDKCGGELYQRADD. An ATP-binding site is contributed by R127. Zn(2+) is bound by residues C130 and C133. Position 136-137 (136-137) interacts with ATP; that stretch reads TY. C150 and C153 together coordinate Zn(2+). AMP is bound by residues R160 and R171. ATP is bound at residue K199.

It belongs to the adenylate kinase family. In terms of assembly, monomer.

The protein resides in the cytoplasm. The catalysed reaction is AMP + ATP = 2 ADP. Its pathway is purine metabolism; AMP biosynthesis via salvage pathway; AMP from ADP: step 1/1. Functionally, catalyzes the reversible transfer of the terminal phosphate group between ATP and AMP. Plays an important role in cellular energy homeostasis and in adenine nucleotide metabolism. The polypeptide is Adenylate kinase (Bacillus pumilus (strain SAFR-032)).